A 33-amino-acid chain; its full sequence is Brevinin-2PTd (33 aa).

C27 and C33 form a disulfide bridge.

Expressed by the skin glands.

It is found in the secreted. In terms of biological role, has antibacterial activity against the Gram-positive bacterium S.aureus ATCC 25923 and the Gram-negative bacterium E.coli ATCC 25726. The protein is Brevinin-2PTd of Pulchrana picturata (Malaysian fire frog).